We begin with the raw amino-acid sequence, 375 residues long: Glutamate 5-kinase (375 aa).

K17 provides a ligand contact to ATP. S57, D144, and N158 together coordinate substrate. Residue T178–D179 coordinates ATP. Residues S284 to K360 form the PUA domain.

Belongs to the glutamate 5-kinase family.

The protein localises to the cytoplasm. The catalysed reaction is L-glutamate + ATP = L-glutamyl 5-phosphate + ADP. Its pathway is amino-acid biosynthesis; L-proline biosynthesis; L-glutamate 5-semialdehyde from L-glutamate: step 1/2. Its function is as follows. Catalyzes the transfer of a phosphate group to glutamate to form L-glutamate 5-phosphate. This Methanococcoides burtonii (strain DSM 6242 / NBRC 107633 / OCM 468 / ACE-M) protein is Glutamate 5-kinase.